The primary structure comprises 304 residues: UDP-N-acetylenolpyruvoylglucosamine reductase (304 aa).

One can recognise an FAD-binding PCMH-type domain in the interval 33-213; it reads IGGPADIMVI…LEITRDLTER (181 aa). Residue R177 is part of the active site. The Proton donor role is filled by S227. Residue E297 is part of the active site.

This sequence belongs to the MurB family. The cofactor is FAD.

It is found in the cytoplasm. The catalysed reaction is UDP-N-acetyl-alpha-D-muramate + NADP(+) = UDP-N-acetyl-3-O-(1-carboxyvinyl)-alpha-D-glucosamine + NADPH + H(+). It functions in the pathway cell wall biogenesis; peptidoglycan biosynthesis. In terms of biological role, cell wall formation. In Alkaliphilus oremlandii (strain OhILAs) (Clostridium oremlandii (strain OhILAs)), this protein is UDP-N-acetylenolpyruvoylglucosamine reductase.